The sequence spans 74 residues: Small integral membrane protein 15 (74 aa).

A helical transmembrane segment spans residues 20–40 (YGFLTTVILALTPLFLASAVL). Positions 42-74 (WKLAKMIEAREKEQKKKQKRQENIAKAKRLKKD) form a coiled coil. Residues 55–66 (QKKKQKRQENIA) are compositionally biased toward basic and acidic residues. Residues 55 to 74 (QKKKQKRQENIAKAKRLKKD) form a disordered region.

Belongs to the SMIM15 family.

It localises to the membrane. This Homo sapiens (Human) protein is Small integral membrane protein 15 (SMIM15).